A 293-amino-acid chain; its full sequence is Acetylglutamate kinase (293 aa).

Substrate-binding positions include 70–71, Arg92, and Asn186; that span reads GG.

This sequence belongs to the acetylglutamate kinase family. ArgB subfamily.

The protein localises to the cytoplasm. It carries out the reaction N-acetyl-L-glutamate + ATP = N-acetyl-L-glutamyl 5-phosphate + ADP. Its pathway is amino-acid biosynthesis; L-arginine biosynthesis; N(2)-acetyl-L-ornithine from L-glutamate: step 2/4. Its function is as follows. Catalyzes the ATP-dependent phosphorylation of N-acetyl-L-glutamate. The sequence is that of Acetylglutamate kinase from Parasynechococcus marenigrum (strain WH8102).